Consider the following 229-residue polypeptide: Transmembrane protein 217 (229 aa).

The chain crosses the membrane as a helical span at residues 13 to 33 (MGTVLSGVFTIMAVDMYLIFE). N-linked (GlcNAc...) asparagine glycosylation is present at N39. 3 helical membrane-spanning segments follow: residues 67 to 87 (IVLF…YSVY), 94 to 114 (LVIY…IQIL), and 129 to 149 (WFGL…VINY). An N-linked (GlcNAc...) asparagine glycan is attached at N156.

Its subcellular location is the membrane. This chain is Transmembrane protein 217 (TMEM217), found in Homo sapiens (Human).